A 458-amino-acid polypeptide reads, in one-letter code: Ammonium transporter Rh type B (458 aa).

At Met1–Leu13 the chain is on the cytoplasmic side. Residues Gln14–Val34 form a helical membrane-spanning segment. The Extracellular segment spans residues Arg35–Tyr61. N-linked (GlcNAc...) asparagine glycosylation occurs at Asn49. The chain crosses the membrane as a helical span at residues Pro62–Leu82. Residues Gln83–Gly86 are Cytoplasmic-facing. Residues Phe87–Val107 form a helical membrane-spanning segment. The Extracellular portion of the chain corresponds to Gln108 to Glu124. A helical membrane pass occupies residues Ser125 to Gly145. The Cytoplasmic portion of the chain corresponds to Lys146 to Pro149. Residues Ala150–Leu170 traverse the membrane as a helical segment. At Leu171–Asp178 the chain is on the extracellular side. The helical transmembrane segment at Ala179–Tyr201 threads the bilayer. Residues Arg202 to Asp219 are Cytoplasmic-facing. A helical transmembrane segment spans residues Leu220–Leu240. Over Thr241–Ala251 the chain is Extracellular. A helical transmembrane segment spans residues Leu252 to Val272. The Cytoplasmic segment spans residues Gly273–His282. Residues Ile283–Thr303 form a helical membrane-spanning segment. Position 304 (Pro304) is a topological domain, extracellular. Residues Phe305–Phe325 form a helical membrane-spanning segment. The Cytoplasmic segment spans residues Thr326–Gly346. A helical transmembrane segment spans residues Met347 to Ala367. Residues Tyr368–Gln393 are Extracellular-facing. The chain crosses the membrane as a helical span at residues Leu394–Leu414. Residues Leu415–Ala458 lie on the Cytoplasmic side of the membrane. Positions Lys416–Pro424 are interaction with ANK3. The short motif at Tyr429–Gln432 is the Basolateral sorting signal element. A disordered region spans residues Gly439 to Ala458. Residues Glu444 to Ala458 are compositionally biased toward basic and acidic residues.

The protein belongs to the ammonium transporter (TC 2.A.49) family. Rh subfamily. In terms of assembly, interacts (via C-terminus) with ANK2 and ANK3; required for targeting to the basolateral membrane. Post-translationally, N-glycosylated.

It localises to the cell membrane. Its subcellular location is the basolateral cell membrane. It catalyses the reaction NH4(+)(in) = NH4(+)(out). It carries out the reaction methylamine(out) = methylamine(in). The enzyme catalyses CO2(out) = CO2(in). In terms of biological role, ammonium transporter involved in the maintenance of acid-base homeostasis. Transports ammonium and its related derivative methylammonium across the basolateral plasma membrane of epithelial cells likely contributing to renal transepithelial ammonia transport and ammonia metabolism. May transport either NH4(+) or NH3 ammonia species predominantly mediating an electrogenic NH4(+) transport. May act as a CO2 channel providing for renal acid secretion. The polypeptide is Ammonium transporter Rh type B (RHBG) (Macaca mulatta (Rhesus macaque)).